Consider the following 378-residue polypeptide: Acetylornithine deacetylase (378 aa).

Residue H76 coordinates Zn(2+). The active site involves D78. D108 contributes to the Zn(2+) binding site. E140 is an active-site residue. 3 residues coordinate Zn(2+): E141, E165, and H351.

The protein belongs to the peptidase M20A family. ArgE subfamily. Homodimer. The cofactor is Zn(2+). It depends on Co(2+) as a cofactor. Glutathione is required as a cofactor.

It localises to the cytoplasm. The catalysed reaction is N(2)-acetyl-L-ornithine + H2O = L-ornithine + acetate. It participates in amino-acid biosynthesis; L-arginine biosynthesis; L-ornithine from N(2)-acetyl-L-ornithine (linear): step 1/1. Catalyzes the hydrolysis of the amide bond of N(2)-acetylated L-amino acids. Cleaves the acetyl group from N-acetyl-L-ornithine to form L-ornithine, an intermediate in L-arginine biosynthesis pathway, and a branchpoint in the synthesis of polyamines. The protein is Acetylornithine deacetylase of Vibrio cholerae serotype O1 (strain ATCC 39541 / Classical Ogawa 395 / O395).